The chain runs to 195 residues: Probable DNA-directed RNA polymerase subunit delta (195 aa).

Residues 14-81 form the HTH HARE-type domain; sequence LSMIEVAHAI…GDNTWGLRAW (68 aa). The tract at residues 91 to 195 is disordered; that stretch reads TVGETEDEED…DEEDKEDDEE (105 aa). Acidic residues-rich tracts occupy residues 116–171 and 179–195; these read TDDD…EDQL and FGDD…DDEE.

The protein belongs to the RpoE family. In terms of assembly, RNAP is composed of a core of 2 alpha, a beta and a beta' subunits. The core is associated with a delta subunit and one of several sigma factors.

In terms of biological role, participates in both the initiation and recycling phases of transcription. In the presence of the delta subunit, RNAP displays an increased specificity of transcription, a decreased affinity for nucleic acids, and an increased efficiency of RNA synthesis because of enhanced recycling. This is Probable DNA-directed RNA polymerase subunit delta from Limosilactobacillus fermentum (strain NBRC 3956 / LMG 18251) (Lactobacillus fermentum).